A 468-amino-acid chain; its full sequence is MAESDLWSVDANSALELSLVEPTEDGLTTVTRFHPRFTYPLFGEEEQIFGYQDLKINLQYHAPDMRPNVKITHSKKFKSIGETQPTDLDALLQGYLPPVAFAKKREFEDAIRLMPADWTPPGEILSEFDGVDGAKFEIRRSNLADDASRQIIDRVQLLILLFIEGGSYIGTDTTDSLDRWDIFFLYNIKPSTTDGTSRYQFAGYSTVYKFFPLQRFPLEPKEAHENLELPSGEFPFSNLRSRTRISQFLILPPFQKSGNGSRLYRTIYDYCLRDPNVIEVTVEDPNEAFDDMRDVADLDFLRQKSEFTDLRINTDIHIPKQGAAPRGVVDEVKSEEARCLYRIAPRQFSRVLEMHLMSRLAETVRPTLVDDKVVAKPTKIETHEYDLWKLFVKQRLYRHNKEVLSQLDRHDRIERLNETLGSVELEYARILALAERRTQATSSNLKRKLDDDENTEGSSSKKARVEDA.

Phosphoserine is present on serine 8. 2 interaction with histone H4 N-terminus regions span residues 44 to 46 (EEE) and 208 to 210 (YKF). Acetyl-CoA contacts are provided by residues 248-250 (FLI) and 255-261 (QKSGNGS). Glutamate 283 acts as the Proton donor/acceptor in catalysis. The disordered stretch occupies residues 442 to 468 (SSNLKRKLDDDENTEGSSSKKARVEDA).

It belongs to the HAT1 family. In terms of assembly, component of the HAT-B complex composed of at least HAT1 and HAT2. The HAT-B complex binds to histone H4 tail. In the nucleus, interacts with GSK1 and SSB1. In the cytoplasm, interacts with ATG3 and ATG9. In terms of processing, phosphorylated at Ser-8 by GSK1 in the nucleus which impairs its translocation to the cytoplasm through interfering the interaction between HAT1 and SSB1. Dephosphorylation under nutrient starvation conditions promotes the interaction between HAT1 and SSB1 and results in the translocation of HAT1 from the nucleus to the cytoplasm in order to acetylate ATG3 and ATG9.

The protein resides in the nucleus. It is found in the cytoplasm. It localises to the preautophagosomal structure. The catalysed reaction is L-lysyl-[protein] + acetyl-CoA = N(6)-acetyl-L-lysyl-[protein] + CoA + H(+). Catalytic component of the histone acetylase B (HAT-B) complex. Has intrinsic substrate specificity that modifies lysine in recognition sequence GXGKXG. Involved in DNA double-strand break repair. Required for appressorium turgor pressure, autophagy and conidial nuclear degradation. During the germination process and upon starvation conditions, translocates from the nucleus to the cytoplasm where it acetylates ATG3 at 'lys-262' and 'Lys-267', thus influencing autophagy through controlling ATG3-ATG8 interaction. Also acetylates ATG9 at 'Lys-621' to regulate ATG9 binding to vesicles, which is also important for autophagy and pathogenicity. This is Histone acetyltransferase type B catalytic subunit from Pyricularia oryzae (strain 70-15 / ATCC MYA-4617 / FGSC 8958) (Rice blast fungus).